Consider the following 298-residue polypeptide: 4-hydroxy-tetrahydrodipicolinate synthase (298 aa).

T51 serves as a coordination point for pyruvate. Y139 functions as the Proton donor/acceptor in the catalytic mechanism. K167 acts as the Schiff-base intermediate with substrate in catalysis. Residue I209 participates in pyruvate binding.

It belongs to the DapA family. In terms of assembly, homotetramer; dimer of dimers.

It localises to the cytoplasm. It carries out the reaction L-aspartate 4-semialdehyde + pyruvate = (2S,4S)-4-hydroxy-2,3,4,5-tetrahydrodipicolinate + H2O + H(+). The protein operates within amino-acid biosynthesis; L-lysine biosynthesis via DAP pathway; (S)-tetrahydrodipicolinate from L-aspartate: step 3/4. Catalyzes the condensation of (S)-aspartate-beta-semialdehyde [(S)-ASA] and pyruvate to 4-hydroxy-tetrahydrodipicolinate (HTPA). The chain is 4-hydroxy-tetrahydrodipicolinate synthase from Haemophilus influenzae (strain ATCC 51907 / DSM 11121 / KW20 / Rd).